The sequence spans 1379 residues: DNA-directed RNA polymerase subunit beta'' (1379 aa).

4 residues coordinate Zn(2+): C220, C293, C300, and C303.

The protein belongs to the RNA polymerase beta' chain family. RpoC2 subfamily. As to quaternary structure, in plastids the minimal PEP RNA polymerase catalytic core is composed of four subunits: alpha, beta, beta', and beta''. When a (nuclear-encoded) sigma factor is associated with the core the holoenzyme is formed, which can initiate transcription. The cofactor is Zn(2+).

Its subcellular location is the plastid. It is found in the chloroplast. It carries out the reaction RNA(n) + a ribonucleoside 5'-triphosphate = RNA(n+1) + diphosphate. DNA-dependent RNA polymerase catalyzes the transcription of DNA into RNA using the four ribonucleoside triphosphates as substrates. This chain is DNA-directed RNA polymerase subunit beta'', found in Crucihimalaya wallichii (Rock-cress).